We begin with the raw amino-acid sequence, 233 residues long: Small ribosomal subunit protein uS3 (233 aa).

Positions 39 to 107 (VRQFLMKTLE…PVQINISEVR (69 aa)) constitute a KH type-2 domain.

It belongs to the universal ribosomal protein uS3 family. Part of the 30S ribosomal subunit. Forms a tight complex with proteins S10 and S14.

Binds the lower part of the 30S subunit head. Binds mRNA in the 70S ribosome, positioning it for translation. The polypeptide is Small ribosomal subunit protein uS3 (Buchnera aphidicola subsp. Acyrthosiphon pisum (strain 5A)).